The sequence spans 291 residues: Elongation factor Ts (291 aa).

The tract at residues 79–82 (TDFV) is involved in Mg(2+) ion dislocation from EF-Tu.

This sequence belongs to the EF-Ts family.

The protein localises to the cytoplasm. In terms of biological role, associates with the EF-Tu.GDP complex and induces the exchange of GDP to GTP. It remains bound to the aminoacyl-tRNA.EF-Tu.GTP complex up to the GTP hydrolysis stage on the ribosome. The chain is Elongation factor Ts from Dinoroseobacter shibae (strain DSM 16493 / NCIMB 14021 / DFL 12).